The following is a 128-amino-acid chain: Large ribosomal subunit protein bL20 (128 aa).

Belongs to the bacterial ribosomal protein bL20 family.

Functionally, binds directly to 23S ribosomal RNA and is necessary for the in vitro assembly process of the 50S ribosomal subunit. It is not involved in the protein synthesizing functions of that subunit. The protein is Large ribosomal subunit protein bL20 of Anaplasma marginale (strain Florida).